Consider the following 36-residue polypeptide: Cytochrome b6-f complex subunit 7 (36 aa).

Over Asn-1–Glu-5 the chain is Lumenal. The chain crosses the membrane as a helical span at residues Ile-6–Leu-28. Residues Arg-29 to Glu-36 lie on the Stromal side of the membrane.

Belongs to the PetM family. In terms of assembly, the 4 large subunits of the cytochrome b6-f complex are cytochrome b6, subunit IV (17 kDa polypeptide, PetD), cytochrome f and the Rieske protein, while the 4 small subunits are PetG, PetL, PetM and PetN. The complex functions as a dimer.

It is found in the plastid. It localises to the chloroplast thylakoid membrane. Functionally, component of the cytochrome b6-f complex, which mediates electron transfer between photosystem II (PSII) and photosystem I (PSI), cyclic electron flow around PSI, and state transitions. This Spinacia oleracea (Spinach) protein is Cytochrome b6-f complex subunit 7.